A 275-amino-acid polypeptide reads, in one-letter code: Thioredoxin-like 1-1, chloroplastic (275 aa).

Residues 1 to 72 (MTEVISKTSL…GDSQDESFRR (72 aa)) constitute a chloroplast transit peptide. The Thioredoxin domain maps to 73-206 (SSAITAQTTL…FRDALAKHGP (134 aa)). Catalysis depends on nucleophile residues C129 and C132. Cysteines 129 and 132 form a disulfide. A disordered region spans residues 238–275 (KPVPVEKEAATPDSNPSLPVPLPSMSSNDEKTLVSAGR). Residues 249 to 264 (PDSNPSLPVPLPSMSS) show a composition bias toward low complexity.

This sequence belongs to the thioredoxin family.

It is found in the plastid. It localises to the chloroplast. In terms of biological role, thiol-disulfide oxidoreductase that may participate in various redox reactions. Possesses insulin disulfide bonds reducing activity. This Arabidopsis thaliana (Mouse-ear cress) protein is Thioredoxin-like 1-1, chloroplastic.